The primary structure comprises 82 residues: Chaperone protein DnaJ 1 (82 aa).

Residues 1–33 (YHLGGPPVTLKLPPGTPAGRTMRARGKGAVRKD) form a disordered region.

The protein belongs to the DnaJ family. Homodimer. It depends on Zn(2+) as a cofactor.

It localises to the cytoplasm. Functionally, participates actively in the response to hyperosmotic and heat shock by preventing the aggregation of stress-denatured proteins and by disaggregating proteins, also in an autonomous, DnaK-independent fashion. Unfolded proteins bind initially to DnaJ; upon interaction with the DnaJ-bound protein, DnaK hydrolyzes its bound ATP, resulting in the formation of a stable complex. GrpE releases ADP from DnaK; ATP binding to DnaK triggers the release of the substrate protein, thus completing the reaction cycle. Several rounds of ATP-dependent interactions between DnaJ, DnaK and GrpE are required for fully efficient folding. Also involved, together with DnaK and GrpE, in the DNA replication of plasmids through activation of initiation proteins. The protein is Chaperone protein DnaJ 1 (dnaJ1) of Streptomyces albus G.